The following is a 215-amino-acid chain: Cytochrome b6 (215 aa).

The chain crosses the membrane as a helical span at residues 32 to 52; it reads IFYCLGGVTLICFLVQFATGF. Cysteine 35 contributes to the heme c binding site. Positions 86 and 100 each coordinate heme b. Transmembrane regions (helical) follow at residues 90–110, 116–136, and 186–206; these read ASMMVLAMILHTFRVYLTGGF, LTWVTGVLLACLTVSFGVTGY, and AHTFVLPWLTVVFMLMHFLMI. Heme b contacts are provided by histidine 187 and histidine 202.

It belongs to the cytochrome b family. PetB subfamily. In terms of assembly, the 4 large subunits of the cytochrome b6-f complex are cytochrome b6, subunit IV (17 kDa polypeptide, PetD), cytochrome f and the Rieske protein, while the 4 small subunits are PetG, PetL, PetM and PetN. The complex functions as a dimer. Heme b serves as cofactor. Heme c is required as a cofactor.

The protein resides in the cell inner membrane. Its function is as follows. Component of the cytochrome b6-f complex, which mediates electron transfer between photosystem II (PSII) and photosystem I (PSI), cyclic electron flow around PSI, and state transitions. This Gloeobacter violaceus (strain ATCC 29082 / PCC 7421) protein is Cytochrome b6.